The chain runs to 290 residues: Probable 2-(5''-triphosphoribosyl)-3'-dephosphocoenzyme-A synthase (290 aa).

Belongs to the CitG/MdcB family.

It carries out the reaction 3'-dephospho-CoA + ATP = 2'-(5''-triphospho-alpha-D-ribosyl)-3'-dephospho-CoA + adenine. Functionally, involved in the formation of 2-(5''-phosphoribosyl)-3'-dephosphocoenzyme-A, the prosthetic group of the acyl-carrier protein of the malonate decarboxylase. In Pseudomonas fluorescens (strain Pf0-1), this protein is Probable 2-(5''-triphosphoribosyl)-3'-dephosphocoenzyme-A synthase.